A 152-amino-acid chain; its full sequence is Xanthine-guanine phosphoribosyltransferase (152 aa).

5-phospho-alpha-D-ribose 1-diphosphate-binding positions include 37-38 (RG) and 88-96 (DDLVDTGNT). Aspartate 89 provides a ligand contact to Mg(2+). Aspartate 92 and isoleucine 135 together coordinate guanine. Aspartate 92 and isoleucine 135 together coordinate xanthine. GMP contacts are provided by residues 92-96 (DTGNT) and 134-135 (WI).

This sequence belongs to the purine/pyrimidine phosphoribosyltransferase family. XGPT subfamily. In terms of assembly, homotetramer. The cofactor is Mg(2+).

Its subcellular location is the cell inner membrane. It carries out the reaction GMP + diphosphate = guanine + 5-phospho-alpha-D-ribose 1-diphosphate. The enzyme catalyses XMP + diphosphate = xanthine + 5-phospho-alpha-D-ribose 1-diphosphate. The catalysed reaction is IMP + diphosphate = hypoxanthine + 5-phospho-alpha-D-ribose 1-diphosphate. Its pathway is purine metabolism; GMP biosynthesis via salvage pathway; GMP from guanine: step 1/1. It functions in the pathway purine metabolism; XMP biosynthesis via salvage pathway; XMP from xanthine: step 1/1. Functionally, purine salvage pathway enzyme that catalyzes the transfer of the ribosyl-5-phosphate group from 5-phospho-alpha-D-ribose 1-diphosphate (PRPP) to the N9 position of the 6-oxopurines guanine and xanthine to form the corresponding ribonucleotides GMP (guanosine 5'-monophosphate) and XMP (xanthosine 5'-monophosphate), with the release of PPi. To a lesser extent, also acts on hypoxanthine. In Actinobacillus succinogenes (strain ATCC 55618 / DSM 22257 / CCUG 43843 / 130Z), this protein is Xanthine-guanine phosphoribosyltransferase.